The chain runs to 287 residues: Probable endonuclease 4 (287 aa).

Zn(2+) is bound by residues H69, H109, E146, D180, H183, H217, D230, H232, and E262.

It belongs to the AP endonuclease 2 family. Requires Zn(2+) as cofactor.

It carries out the reaction Endonucleolytic cleavage to 5'-phosphooligonucleotide end-products.. Its function is as follows. Endonuclease IV plays a role in DNA repair. It cleaves phosphodiester bonds at apurinic or apyrimidinic (AP) sites, generating a 3'-hydroxyl group and a 5'-terminal sugar phosphate. This Petrotoga mobilis (strain DSM 10674 / SJ95) protein is Probable endonuclease 4.